We begin with the raw amino-acid sequence, 485 residues long: MTSRYRVEYALKSHRRDEFIEWIKGLLAVPFVLHADVENYDTDFMKHYEDPEAYEDYLLSREYEIALECQNRYKEIFADVEKLVNHAIIIDKLQDKNPTYVDTSRLRKLVPSVGRFFTPLPLTEAFLVEDSRRSISKRRLVSPSFNDVRSILNTAQVLALAKMYQDSDESGSRLKLITFDGDVTLYADGSSLTPDAPVIDKLIKLLSMNLFIGVVTAAGYPGQSGVPQYYERLKGLIDRIRTTPELNDHQRENLLVMGGESNYLFRYDNEFGNLKFIEADEWYLPIMSSWDKLKIDYIMSTTDKHLKHLQKKFKLDDMDKTTIIRKERSIGIIPNPGYRILREHLEEMVLSCSMKLQEILARTARTPVNMEIVNQLDTSQAVSTQNAADDHIKVCAFNGGSDVWVDIGDKSLGVESLQKYLCKDVKYEHKVCPILKSESLHIGDQFASLGANDFKARLSACTVWIASPRETVAILEDLIQHLSNK.

Arg-132 contacts ATP. Asp-180 (nucleophile) is an active-site residue. Residues Asp-180, Asp-182, Asp-188, Thr-216, Asp-402, and Lys-410 each coordinate IMP. Residues Asp-180 and Asp-182 each coordinate Mg(2+). The Proton donor role is filled by Asp-182. Asp-444 provides a ligand contact to Mg(2+).

Belongs to the ISN1 family. As to quaternary structure, homotetramer. Mg(2+) serves as cofactor.

It carries out the reaction IMP + H2O = inosine + phosphate. Allosterically activated by ATP. ATP binding is a prerequisite to magnesium and substrate binding. ATP binds to 2 of the subunits in the homotetramer inducing a closure of these 2 subunits and the release of the C-terminal loop, thereby activating the enzyme. Its function is as follows. IMP-specific 5'-nucleotidase involved in IMP (inositol monophosphate) degradation. The chain is IMP-specific 5'-nucleotidase 1 (ISN1) from Debaryomyces hansenii (strain ATCC 36239 / CBS 767 / BCRC 21394 / JCM 1990 / NBRC 0083 / IGC 2968) (Yeast).